A 419-amino-acid chain; its full sequence is MRKIIINGGKALSGEVAVSGAKNSVVALIPAIILADDIVILDGVPAISDVDSLIEIMELMGATVNYHGDTLEIDPRGVQDIPMPYGKINSLRASYYFYGSLLGRFGQAVVGLPGGCDLGPRPIDLHLKAFEAMGVEVSYEGENMNLSTNGQKIHGAHIYMDTVSVGATINTMVAATKAQGKTVIENAAREPEIIDVATLLNNMGAHIRGAGTDIITIQGVQKLHGTRHQVIPDRIEAGTYIALAAAIGKGVKITNVLYEHLESFIAKLEEMGVRMTVEEDAIFVEKQESLKAITIKTSPYPGFATDLQQPLTPLLLKADGRGTIIDTIYEKRINHVPELMRMGADISVIGGQIVYQGPSRLTGAQVKATDLRAGAALVTAGLIAEGKTEITNIEFILRGYASIIAKLTALGADIQLIED.

22–23 lines the phosphoenolpyruvate pocket; sequence KN. UDP-N-acetyl-alpha-D-glucosamine is bound at residue Arg-92. Cys-116 functions as the Proton donor in the catalytic mechanism. A 2-(S-cysteinyl)pyruvic acid O-phosphothioketal modification is found at Cys-116. Residues 121–125, Asp-306, and Ile-328 each bind UDP-N-acetyl-alpha-D-glucosamine; that span reads RPIDL.

This sequence belongs to the EPSP synthase family. MurA subfamily.

Its subcellular location is the cytoplasm. It catalyses the reaction phosphoenolpyruvate + UDP-N-acetyl-alpha-D-glucosamine = UDP-N-acetyl-3-O-(1-carboxyvinyl)-alpha-D-glucosamine + phosphate. It participates in cell wall biogenesis; peptidoglycan biosynthesis. Cell wall formation. Adds enolpyruvyl to UDP-N-acetylglucosamine. In Streptococcus pyogenes serotype M1, this protein is UDP-N-acetylglucosamine 1-carboxyvinyltransferase 2.